A 171-amino-acid chain; its full sequence is Photosystem I assembly protein Ycf3 (171 aa).

3 TPR repeats span residues 35-68, 72-105, and 120-153; these read AFTYYRDGMSAQSEGEYAEALQNYYKAMRLEIDP, SYILYNIGLIHTSNGEHAKALEYYFQALERNPSL, and GEQAIQQGDPGTSEIWFDKAAEYWKQAIALAPNN.

The protein belongs to the Ycf3 family.

It is found in the plastid. The protein localises to the chloroplast thylakoid membrane. Its function is as follows. Essential for the assembly of the photosystem I (PSI) complex. May act as a chaperone-like factor to guide the assembly of the PSI subunits. In Psilotum nudum (Whisk fern), this protein is Photosystem I assembly protein Ycf3.